The following is a 233-amino-acid chain: 2-C-methyl-D-erythritol 4-phosphate cytidylyltransferase (233 aa).

The protein belongs to the IspD/TarI cytidylyltransferase family. IspD subfamily.

It carries out the reaction 2-C-methyl-D-erythritol 4-phosphate + CTP + H(+) = 4-CDP-2-C-methyl-D-erythritol + diphosphate. Its pathway is isoprenoid biosynthesis; isopentenyl diphosphate biosynthesis via DXP pathway; isopentenyl diphosphate from 1-deoxy-D-xylulose 5-phosphate: step 2/6. Functionally, catalyzes the formation of 4-diphosphocytidyl-2-C-methyl-D-erythritol from CTP and 2-C-methyl-D-erythritol 4-phosphate (MEP). In Nitrosomonas eutropha (strain DSM 101675 / C91 / Nm57), this protein is 2-C-methyl-D-erythritol 4-phosphate cytidylyltransferase.